Consider the following 265-residue polypeptide: Small ribosomal subunit protein uS2 (265 aa).

Residues 231–265 (VEEEYEDYEGSEEDYDYDETEYADSVIPEDGEEAE) form a disordered region.

The protein belongs to the universal ribosomal protein uS2 family.

This Nostoc sp. (strain PCC 7120 / SAG 25.82 / UTEX 2576) protein is Small ribosomal subunit protein uS2.